The sequence spans 47 residues: Photosystem II reaction center protein K (47 aa).

A propeptide spanning residues 1–10 is cleaved from the precursor; it reads MAPLTLDLLA. The chain crosses the membrane as a helical span at residues 26 to 46; that stretch reads LPLIPLLFFLLVFVWQAAVGF.

This sequence belongs to the PsbK family. PSII is composed of 1 copy each of membrane proteins PsbA, PsbB, PsbC, PsbD, PsbE, PsbF, PsbH, PsbI, PsbJ, PsbK, PsbL, PsbM, PsbT, PsbX, PsbY, Psb30/Ycf12, peripheral proteins PsbO, CyanoQ (PsbQ), PsbU, PsbV and a large number of cofactors. It forms dimeric complexes.

The protein localises to the cellular thylakoid membrane. One of the components of the core complex of photosystem II (PSII). PSII is a light-driven water:plastoquinone oxidoreductase that uses light energy to abstract electrons from H(2)O, generating O(2) and a proton gradient subsequently used for ATP formation. It consists of a core antenna complex that captures photons, and an electron transfer chain that converts photonic excitation into a charge separation. The sequence is that of Photosystem II reaction center protein K from Prochlorococcus marinus (strain SARG / CCMP1375 / SS120).